The following is a 450-amino-acid chain: Carbamoyl phosphate synthase arginine-specific small chain (450 aa).

The transit peptide at 1-29 (MFAARLFKAMPARASAFPSVNASIQSRFM) directs the protein to the mitochondrion. Residues 220 to 407 (HVAVIDCGVK…LDSVRKYKAS (188 aa)) form the Glutamine amidotransferase type-1 domain. Catalysis depends on cysteine 296, which acts as the Nucleophile. Residues histidine 380 and glutamate 382 contribute to the active site.

The protein belongs to the CarA family. In terms of assembly, heterodimer composed of 2 chains; the small (or glutamine) chain promotes the hydrolysis of glutamine to ammonia, which is used by the large (or ammonia) chain to synthesize carbamoyl phosphate.

It is found in the mitochondrion matrix. The enzyme catalyses hydrogencarbonate + L-glutamine + 2 ATP + H2O = carbamoyl phosphate + L-glutamate + 2 ADP + phosphate + 2 H(+). The catalysed reaction is L-glutamine + H2O = L-glutamate + NH4(+). It functions in the pathway amino-acid biosynthesis; L-arginine biosynthesis; carbamoyl phosphate from bicarbonate: step 1/1. Functionally, small subunit of the arginine-specific carbamoyl phosphate synthase (CPSase). CPSase catalyzes the formation of carbamoyl phosphate from the ammonia moiety of glutamine, carbonate, and phosphate donated by ATP, the first step of the arginine biosynthetic pathway. The small subunit (glutamine amidotransferase) binds and cleaves glutamine to supply the large subunit with the substrate ammonia. The chain is Carbamoyl phosphate synthase arginine-specific small chain (cpa1) from Aspergillus oryzae (strain ATCC 42149 / RIB 40) (Yellow koji mold).